A 335-amino-acid polypeptide reads, in one-letter code: DNA-directed RNA polymerase subunit alpha (335 aa).

An alpha N-terminal domain (alpha-NTD) region spans residues 1-233 (MIRDEISVSI…DLFIPFLHGE (233 aa)). An alpha C-terminal domain (alpha-CTD) region spans residues 264-335 (KEKIAFQLIF…KLFAIDPPRN (72 aa)).

This sequence belongs to the RNA polymerase alpha chain family. In terms of assembly, in plastids the minimal PEP RNA polymerase catalytic core is composed of four subunits: alpha, beta, beta', and beta''. When a (nuclear-encoded) sigma factor is associated with the core the holoenzyme is formed, which can initiate transcription.

It is found in the plastid. Its subcellular location is the chloroplast. The enzyme catalyses RNA(n) + a ribonucleoside 5'-triphosphate = RNA(n+1) + diphosphate. Functionally, DNA-dependent RNA polymerase catalyzes the transcription of DNA into RNA using the four ribonucleoside triphosphates as substrates. The polypeptide is DNA-directed RNA polymerase subunit alpha (Pinus thunbergii (Japanese black pine)).